The following is a 279-amino-acid chain: Tryptophan 2,3-dioxygenase (279 aa).

Residues 48–52, Tyr-110, and Arg-114 contribute to the substrate site; that span reads FIIQH. His-237 contacts heme. Substrate is bound at residue Thr-251.

This sequence belongs to the tryptophan 2,3-dioxygenase family. In terms of assembly, homotetramer. Heme serves as cofactor.

The enzyme catalyses L-tryptophan + O2 = N-formyl-L-kynurenine. It participates in amino-acid degradation; L-tryptophan degradation via kynurenine pathway; L-kynurenine from L-tryptophan: step 1/2. Functionally, heme-dependent dioxygenase that catalyzes the oxidative cleavage of the L-tryptophan (L-Trp) pyrrole ring and converts L-tryptophan to N-formyl-L-kynurenine. Catalyzes the oxidative cleavage of the indole moiety. This Bradyrhizobium diazoefficiens (strain JCM 10833 / BCRC 13528 / IAM 13628 / NBRC 14792 / USDA 110) protein is Tryptophan 2,3-dioxygenase.